A 78-amino-acid chain; its full sequence is DNA-directed RNA polymerase subunit omega (78 aa).

The protein belongs to the RNA polymerase subunit omega family. In terms of assembly, in cyanobacteria the RNAP catalytic core is composed of 2 alpha, 1 beta, 1 beta', 1 gamma and 1 omega subunit. When a sigma factor is associated with the core the holoenzyme is formed, which can initiate transcription.

The catalysed reaction is RNA(n) + a ribonucleoside 5'-triphosphate = RNA(n+1) + diphosphate. Promotes RNA polymerase assembly. Latches the N- and C-terminal regions of the beta' subunit thereby facilitating its interaction with the beta and alpha subunits. In Trichormus variabilis (strain ATCC 29413 / PCC 7937) (Anabaena variabilis), this protein is DNA-directed RNA polymerase subunit omega.